The chain runs to 219 residues: Redox-sensing transcriptional repressor Rex (219 aa).

The segment at residues Arg-17–Phe-56 is a DNA-binding region (H-T-H motif). Residue Gly-91–Gly-96 participates in NAD(+) binding.

This sequence belongs to the transcriptional regulatory Rex family. Homodimer.

The protein localises to the cytoplasm. In terms of biological role, modulates transcription in response to changes in cellular NADH/NAD(+) redox state. The polypeptide is Redox-sensing transcriptional repressor Rex (Caldicellulosiruptor saccharolyticus (strain ATCC 43494 / DSM 8903 / Tp8T 6331)).